Reading from the N-terminus, the 480-residue chain is UDP-N-acetylmuramoyl-L-alanyl-D-glutamate--2,6-diaminopimelate ligase (480 aa).

Ser21 is a UDP-N-acetyl-alpha-D-muramoyl-L-alanyl-D-glutamate binding site. 98 to 104 is a binding site for ATP; that stretch reads GTNGKSS. UDP-N-acetyl-alpha-D-muramoyl-L-alanyl-D-glutamate contacts are provided by residues 144 to 145, Ser171, Gln177, and Arg179; that span reads TT. N6-carboxylysine is present on Lys211. Meso-2,6-diaminopimelate contacts are provided by residues Arg372, 396–399, Gly446, and Glu450; that span reads DNPR. Residues 396–399 carry the Meso-diaminopimelate recognition motif motif; the sequence is DNPR.

This sequence belongs to the MurCDEF family. MurE subfamily. Mg(2+) serves as cofactor. Carboxylation is probably crucial for Mg(2+) binding and, consequently, for the gamma-phosphate positioning of ATP.

It is found in the cytoplasm. The enzyme catalyses UDP-N-acetyl-alpha-D-muramoyl-L-alanyl-D-glutamate + meso-2,6-diaminopimelate + ATP = UDP-N-acetyl-alpha-D-muramoyl-L-alanyl-gamma-D-glutamyl-meso-2,6-diaminopimelate + ADP + phosphate + H(+). The protein operates within cell wall biogenesis; peptidoglycan biosynthesis. In terms of biological role, catalyzes the addition of meso-diaminopimelic acid to the nucleotide precursor UDP-N-acetylmuramoyl-L-alanyl-D-glutamate (UMAG) in the biosynthesis of bacterial cell-wall peptidoglycan. In Rickettsia prowazekii (strain Madrid E), this protein is UDP-N-acetylmuramoyl-L-alanyl-D-glutamate--2,6-diaminopimelate ligase.